The chain runs to 984 residues: MSGQVPRVPEEMFKEVKYYAVGDLDPQVIQLLKAGKAKEVSYNALASHIISEDGDNPEVGEAREVFDLPVVKPSWVILSVQCGALLPVNGFSPESCQIFFGITACLSQVSPEDRSALWAMLTFHGGGCQLNLNRKCTHLVVPEPKGEKYECALRRASIKIVTPDWVLDCISEKTRKDEALYHPRLIVYEEEEEEEEEEEGAGNEEPDSPNEGSTDGKSSPASSQEGSPSGEPPFSPKSSAEKSKGELMFDDSSDSSPEKQERNLNWTPAEVPQLAAAKRRLPPGKEPGLINLCANVPPVPGGILPPEVRGSLLAPGQSLQGPERPEVMAAWSPAMRTLRNITNNADIQQMSSRPSNVAHILQSLSAPTKTLEQQVNHSQQGPASAVLLGQVKVAPEPAPAPQPILHLQPQQLLQLQQQHLAQQPYPPPPPHPFPPPPAHPHQFPQPPLQRPQPPLQQQQLSHLQQQQLQHLQRLQQMQPTPTAQLPGPPAQALQPPPPQAQAQPPLFGHDPAVEIPEEGFLLGCVFAIADYPEQMSDKQLLATWKRIIQAHGGAVDPTFSSRCTHLLCESQVSGLFAQAMKERKRCITAHWLNTVLKKKKLVPPHRALHFPVAFPPGGKPCSQHIISVTGFVDNDRDDLKLMAYLAGAKYTGYLCRSNTVLICREPTGLKYEKAKEWRIPCVNAQWLGDILLGNFEALRQTQYGRYTAFGLQDPFAPTPQLVLSLLDAWRVPLKVSSELLMGVRLPPKPKQNEVTNVQPSSKRARIEDIPPPTKKLTPELTPFVLFTGFEPVQVQQYIKKLYILGGEVAESAQKCTHLIASKVTRTVKFLTAISVVKHIVTPEWLEECFKCQKFVDEQNYLLRDAEAEVLFSFSLEESLRRAHASPLFKAKYFYITPGICPSLSTMKAIVECAGGKVLSRQPSFRKLMEHKQNKSLSEIVLISCENDLHLCREYFARGIDVHNAEFVLTGVLTQTLDYESYKFN.

BRCT domains are found at residues 8–93 (VPEE…GFSP) and 94–183 (ESCQ…LYHP). The segment at 94–183 (ESCQIFFGIT…TRKDEALYHP (90 aa)) is interaction with PAGR1. Disordered regions lie at residues 187–271 (VYEE…PAEV) and 417–509 (QQHL…LFGH). Positions 188 to 208 (YEEEEEEEEEEEGAGNEEPDS) are enriched in acidic residues. Residues 217–229 (KSSPASSQEGSPS) are compositionally biased toward low complexity. 2 positions are modified to phosphoserine: Ser227 and Ser235. The span at 424-454 (PYPPPPPHPFPPPPAHPHQFPQPPLQRPQPP) shows a compositional bias: pro residues. A compositionally biased stretch (low complexity) spans 455-485 (LQQQQLSHLQQQQLQHLQRLQQMQPTPTAQL). The span at 486-499 (PGPPAQALQPPPPQ) shows a compositional bias: pro residues. An interaction with TP53BP1 region spans residues 505-984 (PLFGHDPAVE…TLDYESYKFN (480 aa)). 2 BRCT domains span residues 516–609 (PEEG…RALH) and 616–704 (PGGK…TQYG). The Nuclear localization signal signature appears at 583 to 600 (RKRCITAHWLNTVLKKKK). Residues 750 to 771 (KQNEVTNVQPSSKRARIEDIPP) are disordered. Over residues 752-761 (NEVTNVQPSS) the composition is skewed to polar residues. 2 consecutive BRCT domains span residues 781–862 (TPFV…NYLL) and 883–924 (HASP…QPSF).

In terms of assembly, interacts with the C-terminal transactivation domain of PAX2. Forms a constitutive complex with PAGR1 independently of the MLL2/MLL3 complex. Interacts with TP53BP1 (when phosphorylated at the N-terminus by ATM). Interacts with HLTF. Component of the KMT2 family MLL2/MLL3 complex (also named ASCOM complex), at least composed of the HMTs KMT2D and/or KMT2C, the common subunits ASH2L, RBBP5, WDR5 and DPY30, and the complex type-specific subunits PAXIP1/PTIP, PAGR1, NCOA6 and KDM6A; required for the association of PAGR1 with the MLL2/MLL3 complex. Interacts with NUPR1; this interaction prevents PAXIP1 inhibition of PAX2 transcription factor activity.

The protein resides in the nucleus matrix. It localises to the chromosome. Its function is as follows. Involved in DNA damage response and in transcriptional regulation through histone methyltransferase (HMT) complexes. Plays a role in early development. In DNA damage response is required for cell survival after ionizing radiation. In vitro shown to be involved in the homologous recombination mechanism for the repair of double-strand breaks (DSBs). Its localization to DNA damage foci requires RNF8 and UBE2N. Recruits TP53BP1 to DNA damage foci and, at least in particular repair processes, effective DNA damage response appears to require the association with TP53BP1 phosphorylated by ATM at 'Ser-25'. Together with TP53BP1 regulates ATM association. Proposed to recruit PAGR1 to sites of DNA damage and the PAGR1:PAXIP1 complex is required for cell survival in response to DNA damage; the function is probably independent of MLL-containing histone methyltransferase (HMT) complexes. However, this function has been questioned. Promotes ubiquitination of PCNA following UV irradiation and may regulate recruitment of polymerase eta and RAD51 to chromatin after DNA damage. Proposed to be involved in transcriptional regulation by linking MLL-containing histone methyltransferase (HMT) complexes to gene promoters by interacting with promoter-bound transcription factors such as PAX2. Associates with gene promoters that are known to be regulated by KMT2D/MLL2. During immunoglobulin class switching in activated B-cells is involved in trimethylation of histone H3 at 'Lys-4' and in transcription initiation of downstream switch regions at the immunoglobulin heavy-chain (Igh) locus; this function appears to involve the recruitment of MLL-containing HMT complexes. Conflictingly, its function in transcriptional regulation during immunoglobulin class switching is reported to be independent of the MLL2/MLL3 complex. The protein is PAX-interacting protein 1 (PAXIP1) of Bos taurus (Bovine).